We begin with the raw amino-acid sequence, 202 residues long: Hydrogenase expression/formation protein HupD (202 aa).

Glutamate 28, aspartate 74, and histidine 105 together coordinate Ni(2+).

This sequence belongs to the peptidase A31 family.

Its function is as follows. Not known. Could be involved in the processing of hydrogenase. This is Hydrogenase expression/formation protein HupD (hupD) from Rhizobium leguminosarum bv. viciae.